Here is a 347-residue protein sequence, read N- to C-terminus: Protease HtpX homolog (347 aa).

The next 3 membrane-spanning stretches (helical) occupy residues 8–28 (IAFG…VVIA), 46–66 (ALTA…IAIV), and 76–96 (WGFI…TYIA). Zn(2+) is bound at residue His-174. Glu-175 is an active-site residue. His-178 contributes to the Zn(2+) binding site. The next 2 membrane-spanning stretches (helical) occupy residues 185-205 (ALML…VSSV) and 221-241 (LLAA…LLVL). A Zn(2+)-binding site is contributed by Glu-248.

It belongs to the peptidase M48B family. Zn(2+) serves as cofactor.

It localises to the cell membrane. This chain is Protease HtpX homolog, found in Pyrobaculum islandicum (strain DSM 4184 / JCM 9189 / GEO3).